The following is a 98-amino-acid chain: Cell cycle protein GpsB (98 aa).

Residues 34–71 are a coiled coil; it reads LDIVIKDYEAFQQELDELRQENARLKRQVEELQKRPTT.

Belongs to the GpsB family. In terms of assembly, forms polymers through the coiled coil domains. Interacts with PBP1, MreC and EzrA.

It localises to the cytoplasm. Its function is as follows. Divisome component that associates with the complex late in its assembly, after the Z-ring is formed, and is dependent on DivIC and PBP2B for its recruitment to the divisome. Together with EzrA, is a key component of the system that regulates PBP1 localization during cell cycle progression. Its main role could be the removal of PBP1 from the cell pole after pole maturation is completed. Also contributes to the recruitment of PBP1 to the division complex. Not essential for septum formation. In Geobacillus thermodenitrificans (strain NG80-2), this protein is Cell cycle protein GpsB.